The primary structure comprises 619 residues: Transcription factor 7-like 2 (619 aa).

Positions 1–11 are enriched in gly residues; it reads MPQLNGGGGDD. The interval 1–53 is CTNNB1-binding; sequence MPQLNGGGGDDLGANDELISFKDEGEQEEKSSENSSAERDLADVKSSLVNESE. The disordered stretch occupies residues 1–96; it reads MPQLNGGGGD…AKRQDGGLFK (96 aa). Over residues 19–43 the composition is skewed to basic and acidic residues; sequence ISFKDEGEQEEKSSENSSAERDLAD. Lys22 is covalently cross-linked (Glycyl lysine isopeptide (Lys-Gly) (interchain with G-Cter in SUMO2)). Polar residues predominate over residues 47 to 57; it reads SLVNESETNQN. Positions 63–91 are enriched in basic and acidic residues; that stretch reads EAERRPPPRSESFRDKSRESLEEAAKRQD. Thr201 and Thr212 each carry phosphothreonine; by NLK. Residues 201-395 form a mediates interaction with MAD2L2 region; it reads TPLITYSNEH…RRWHALSREE (195 aa). Residues 318 to 328 are compositionally biased toward polar residues; sequence TVKQESSQSDV. Disordered regions lie at residues 318 to 350, 420 to 441, 496 to 547, and 574 to 619; these read TVKQESSQSDVGSLHSSKHQDSKKEEEKKKPHI, RDNYGKKKKRKRDKQPGETNEH, CLSP…AHLS, and DLPP…KSLE. Lys320 participates in a covalent cross-link: Glycyl lysine isopeptide (Lys-Gly) (interchain with G-Cter in SUMO). A compositionally biased stretch (basic and acidic residues) spans 335–346; that stretch reads KHQDSKKEEEKK. A DNA-binding region (HMG box) is located at residues 350–418; that stretch reads IKKPLNAFML…LHMQLYPGWS (69 aa). The Nuclear localization signal motif lies at 425 to 430; it reads KKKKRK. The segment at 459-505 is promoter-specific activation domain; it reads SAPKKCRARFGLDQQNNWCGPCRRKKKCVRYIQGEGSCLSPPSSDGS. Over residues 496 to 508 the composition is skewed to low complexity; sequence CLSPPSSDGSLLD. Lys539 participates in a covalent cross-link: Glycyl lysine isopeptide (Lys-Gly) (interchain with G-Cter in SUMO2). The span at 574 to 603 shows a compositional bias: low complexity; it reads DLPPAALQPAAPSSSIAQPSTSSLHSHSSL. The segment covering 604 to 619 has biased composition (polar residues); that stretch reads AGTQPQPLSLVTKSLE.

This sequence belongs to the TCF/LEF family. As to quaternary structure, interacts with TGFB1I1. Interacts with CTNNB1 (via the armadillo repeat); forms stable transcription complex. Interacts with EP300. Interacts with NLK. Interacts with CCDC85B (probably through the HMG box); prevents interaction with CTNNB1. Interacts with TNIK. Interacts with MAD2L2; prevents TCF7L2/TCF4 binding to promZIPK/DAPK3oters, negatively modulating its transcriptional activity. Interacts with ZIPK/DAPK3. Interacts with XIAP/BIRC4 and TLE3. Interacts with DDIT3/CHOP. The CTNNB1 and TCF7L2/TCF4 complex interacts with PML (isoform PML-4). Identified in a complex with CTNNB1 and FERMT2. Interacts with SPIN1. Interacts with C11orf84/SPINDOC in a SPIN1-dependent manner. Interacts with DAZAP2; the interaction results in localization of DAZAP2 to the nucleus. In terms of processing, in vitro, phosphorylated by TNIK. Post-translationally, phosphorylated at Thr-201 and/or Thr-212 by NLK. Phosphorylation by NLK at these sites inhibits DNA-binding by TCF7L2/TCF4, thereby preventing transcriptional activation of target genes of the canonical Wnt/beta-catenin signaling pathway. Polysumoylated. Sumoylation is enhanced by PIAS family members and desumoylation is enhanced by SENP2. Sumoylation/desumoylation regulates TCF7L2/TCF4 transcription activity in the Wnt/beta-catenin signaling pathway without altering interaction with CTNNB1 nor binding to DNA. Detected in epithelium from small intestine, with the highest expression at the top of the crypts and a gradient of expression from crypt to villus. Detected in colon epithelium and colon cancer, and in epithelium from mammary gland and carcinomas derived therefrom.

It localises to the nucleus. The protein localises to the PML body. Its function is as follows. Participates in the Wnt signaling pathway and modulates MYC expression by binding to its promoter in a sequence-specific manner. Acts as a repressor in the absence of CTNNB1, and as activator in its presence. Activates transcription from promoters with several copies of the Tcf motif 5'-CCTTTGATC-3' in the presence of CTNNB1. TLE1, TLE2, TLE3 and TLE4 repress transactivation mediated by TCF7L2/TCF4 and CTNNB1. Expression of dominant-negative mutants results in cell-cycle arrest in G1. Necessary for the maintenance of the epithelial stem-cell compartment of the small intestine. This is Transcription factor 7-like 2 (TCF7L2) from Homo sapiens (Human).